The sequence spans 81 residues: Photosystem I iron-sulfur center (81 aa).

4Fe-4S ferredoxin-type domains follow at residues 2-31 (SHSV…MVSW) and 39-68 (IASA…VRVY). Cys-11, Cys-14, Cys-17, Cys-21, Cys-48, Cys-51, Cys-54, and Cys-58 together coordinate [4Fe-4S] cluster.

In terms of assembly, the eukaryotic PSI reaction center is composed of at least 11 subunits. [4Fe-4S] cluster serves as cofactor.

Its subcellular location is the plastid. The protein resides in the chloroplast thylakoid membrane. The catalysed reaction is reduced [plastocyanin] + hnu + oxidized [2Fe-2S]-[ferredoxin] = oxidized [plastocyanin] + reduced [2Fe-2S]-[ferredoxin]. Its function is as follows. Apoprotein for the two 4Fe-4S centers FA and FB of photosystem I (PSI); essential for photochemical activity. FB is the terminal electron acceptor of PSI, donating electrons to ferredoxin. The C-terminus interacts with PsaA/B/D and helps assemble the protein into the PSI complex. Required for binding of PsaD and PsaE to PSI. PSI is a plastocyanin/cytochrome c6-ferredoxin oxidoreductase, converting photonic excitation into a charge separation, which transfers an electron from the donor P700 chlorophyll pair to the spectroscopically characterized acceptors A0, A1, FX, FA and FB in turn. This chain is Photosystem I iron-sulfur center, found in Rhodomonas salina (Cryptomonas salina).